Consider the following 437-residue polypeptide: Putative ABC transporter ATP-binding protein CTC_00753 (437 aa).

ABC transporter domains are found at residues 1 to 143 (MERE…LPTI) and 179 to 416 (LKFK…QISK). ATP is bound at residue 219-226 (GENGAGKS).

It belongs to the ABC transporter superfamily.

It localises to the cell membrane. Functionally, probably part of an ABC transporter complex. Responsible for energy coupling to the transport system. The sequence is that of Putative ABC transporter ATP-binding protein CTC_00753 from Clostridium tetani (strain Massachusetts / E88).